Consider the following 499-residue polypeptide: Heparin cofactor 2 (499 aa).

An N-terminal signal peptide occupies residues 1–19; that stretch reads MKHSLNALLIFLIITSAWG. At Ser-37 the chain carries Phosphoserine; by FAM20C. An N-linked (GlcNAc...) (complex) asparagine glycan is attached at Asn-49. Positions 68-79 are chemotactic activity; that stretch reads DWIPEGEEDDDY. 2 repeat units span residues 73-83 and 87-97. Positions 73-97 are 2 X 11 AA approximate repeats, Asp/Glu-rich (acidic) (hirudin-like); sequence GEEDDDYLDLEKIFSEDDDYIDIVD. Sulfotyrosine occurs at positions 79 and 92. Asn-188 carries an N-linked (GlcNAc...) asparagine glycan. Positions 192-212 are glycosaminoglycan-binding site; the sequence is KYEITTIHNLFRKLTHRLFRR. An N-linked (GlcNAc...) asparagine glycan is attached at Asn-387.

It belongs to the serpin family. In terms of processing, phosphorylated by FAM20C in the extracellular medium. In terms of tissue distribution, expressed predominantly in liver. Also present in plasma. As to expression, expressed in plasma (at protein level). Expressed in liver.

In terms of biological role, thrombin inhibitor activated by the glycosaminoglycans, heparin or dermatan sulfate. In the presence of the latter, HC-II becomes the predominant thrombin inhibitor in place of antithrombin III (AT-III). Also inhibits chymotrypsin, but in a glycosaminoglycan-independent manner. Peptides at the N-terminal of HC-II have chemotactic activity for both monocytes and neutrophils. Functionally, shows negligible inhibition, in vitro, of thrombin and tPA and no inhibition of factor Xa, in vitro. This is Heparin cofactor 2 (SERPIND1) from Homo sapiens (Human).